The chain runs to 755 residues: ABC transporter G family member 2 (755 aa).

An ABC transporter domain is found at Leu98–Glu358. Position 151–158 (Gly151–Ser158) interacts with ATP. One can recognise an ABC transmembrane type-2 domain in the interval Ile449–Phe659. A run of 6 helical transmembrane segments spans residues Leu468 to Thr488, Phe503 to Leu523, Ile552 to Leu572, Phe579 to Phe599, Leu609 to Ile629, and Leu728 to Ile748.

Belongs to the ABC transporter superfamily. ABCG family. Eye pigment precursor importer (TC 3.A.1.204) subfamily.

The protein resides in the membrane. In Arabidopsis thaliana (Mouse-ear cress), this protein is ABC transporter G family member 2 (ABCG2).